The primary structure comprises 940 residues: Translation initiation factor IF-2 (940 aa).

Disordered regions lie at residues 116-137, 151-196, 210-294, and 318-346; these read PEQEQLESTSVAEIPESVSSDT, EVEA…EQRS, AVRK…VKKV, and HSAPKSKKGGQNNNSSNSGSRPLIKVANR. A compositionally biased stretch (polar residues) spans 121–137; the sequence is LESTSVAEIPESVSSDT. Residues 159-180 are compositionally biased toward acidic residues; that stretch reads PEPEVEATPEPEVEDVVAEEAE. A compositionally biased stretch (low complexity) spans 181–193; it reads PAAAEPAPAPVVE. The segment covering 213–239 has biased composition (basic and acidic residues); the sequence is KKAEEEAEVARRKADAEKAEAAAKQKA. Residues 282–294 are compositionally biased toward basic residues; sequence KHNKKAGKAVKKV. Over residues 326–337 the composition is skewed to low complexity; sequence GGQNNNSSNSGS. The tr-type G domain occupies 441–610; the sequence is ARAPVVTVMG…ALQAELLELS (170 aa). A G1 region spans residues 450–457; it reads GHVDHGKT. 450-457 is a GTP binding site; it reads GHVDHGKT. The interval 475–479 is G2; it reads GITQH. Residues 496 to 499 form a G3 region; that stretch reads DTPG. GTP contacts are provided by residues 496 to 500 and 550 to 553; these read DTPGH and NKID. Residues 550 to 553 form a G4 region; that stretch reads NKID. Positions 586-588 are G5; that stretch reads SAQ.

This sequence belongs to the TRAFAC class translation factor GTPase superfamily. Classic translation factor GTPase family. IF-2 subfamily.

It localises to the cytoplasm. In terms of biological role, one of the essential components for the initiation of protein synthesis. Protects formylmethionyl-tRNA from spontaneous hydrolysis and promotes its binding to the 30S ribosomal subunits. Also involved in the hydrolysis of GTP during the formation of the 70S ribosomal complex. The protein is Translation initiation factor IF-2 of Teredinibacter turnerae (strain ATCC 39867 / T7901).